Here is a 423-residue protein sequence, read N- to C-terminus: tRNA(Ile)-lysidine synthase (423 aa).

43 to 48 (SSGVDS) provides a ligand contact to ATP.

This sequence belongs to the tRNA(Ile)-lysidine synthase family.

It is found in the cytoplasm. It catalyses the reaction cytidine(34) in tRNA(Ile2) + L-lysine + ATP = lysidine(34) in tRNA(Ile2) + AMP + diphosphate + H(+). Ligates lysine onto the cytidine present at position 34 of the AUA codon-specific tRNA(Ile) that contains the anticodon CAU, in an ATP-dependent manner. Cytidine is converted to lysidine, thus changing the amino acid specificity of the tRNA from methionine to isoleucine. This chain is tRNA(Ile)-lysidine synthase, found in Helicobacter hepaticus (strain ATCC 51449 / 3B1).